The primary structure comprises 228 residues: Prolactin (228 aa).

The N-terminal stretch at 1-29 (MCTKRSSLKGSLLLLLLISSLLLSRSVDS) is a signal peptide. The cysteines at positions 33 and 40 are disulfide-linked. 3 positions are modified to phosphoserine: Ser-55, Ser-63, and Ser-119. Intrachain disulfides connect Cys-87–Cys-203 and Cys-220–Cys-228.

The protein belongs to the somatotropin/prolactin family. In terms of assembly, interacts with PRLR.

It is found in the secreted. Its function is as follows. Prolactin acts primarily on the mammary gland by promoting lactation. This Isoodon macrourus (Short-nosed bandicoot) protein is Prolactin (PRL).